A 615-amino-acid polypeptide reads, in one-letter code: MPSRKFADGEVVRGRWPGSSLYYEVEILSHDSTSQLYTVKYKDGTELELKENDIKPLTSFRQRKGGSTSSSPSRRRGSRSRSRSRSPGRPPKSARRSASASHQADIKEARREVEVKLTPLILKPFGNSISRYNGEPEHIERNDAPHKNTQEKFSLSQESSYIATQYSLRPRREEVKLKEIDSKEEKYVAKELAVRTFEVTPIRAKDLEFGGVPGVFLIMFGLPVFLFLLLLMCKQKDPSLLNFPPPLPALYELWETRVFGVYLLWFLIQVLFYLLPIGKVVEGTPLIDGRRLKYRLNGFYAFILTSAVIGTSLFQGVEFHYVYSHFLQFALAATVFCVVLSVYLYMRSLKAPRNDLSPASSGNAVYDFFIGRELNPRIGTFDLKYFCELRPGLIGWVVINLVMLLAEMKIQDRAVPSLAMILVNSFQLLYVVDALWNEEALLTTMDIIHDGFGFMLAFGDLVWVPFIYSFQAFYLVSHPNEVSWPMASLIIVLKLCGYVIFRGANSQKNAFRKNPSDPKLAHLKTIHTSTGKNLLVSGWWGFVRHPNYLGDLIMALAWSLPCGFNHILPYFYIIYFTMLLVHREARDEYHCKKKYGVAWEKYCQRVPYRIFPYIY.

Positions 1-62 (MPSRKFADGE…DIKPLTSFRQ (62 aa)) constitute a Tudor domain. Over 1–211 (MPSRKFADGE…IRAKDLEFGG (211 aa)) the chain is Nuclear. The disordered stretch occupies residues 52 to 109 (NDIKPLTSFRQRKGGSTSSSPSRRRGSRSRSRSRSPGRPPKSARRSASASHQADIKEA). At Lys-55 the chain carries N6-acetyllysine. Thr-58 carries the post-translational modification Phosphothreonine. Phosphoserine occurs at positions 59 and 67. A phosphoserine; by CDK1 mark is found at Ser-71 and Ser-86. The segment covering 73–86 (SRRRGSRSRSRSRS) has biased composition (basic residues). 2 positions are modified to phosphoserine: Ser-97 and Ser-99. Residue Thr-118 is modified to Phosphothreonine. Ser-128 carries the phosphoserine modification. Thr-200 is subject to Phosphothreonine. The next 8 helical transmembrane spans lie at 212-232 (VPGV…LLLM), 258-278 (VFGV…LPIG), 299-319 (FYAF…GVEF), 326-346 (FLQF…YLYM), 386-406 (FCEL…MLLA), 447-467 (IIHD…VPFI), 481-501 (EVSW…YVIF), and 561-581 (PCGF…MLLV). N6-acetyllysine occurs at positions 594 and 601.

This sequence belongs to the ERG4/ERG24 family. Interacts with CBX5. Interacts with DNA. Interaction with DNA is sequence independent with higher affinity for supercoiled and relaxed circular DNA than linear DNA. Interacts with lamin B. Interacts with CLNK. Interacts with TMEM147; promoting LBR localization to the nucleus inner membrane. Phosphorylated by CDK1 in mitosis when the inner nuclear membrane breaks down into vesicles that dissociate from the lamina and the chromatin. It is phosphorylated by different protein kinases in interphase when the membrane is associated with these structures. Phosphorylation of LBR and HP1 proteins may be responsible for some of the alterations in chromatin organization and nuclear structure which occur at various times during the cell cycle. Phosphorylated by SRPK1. In late anaphase LBR is dephosphorylated, probably by PP1 and/or PP2A, allowing reassociation with chromatin. As to expression, expressed in the bone marrow, liver, heart, adrenal gland, lung, placenta and uterus. Expressed in osteoclasts and osteoblast-like cells.

Its subcellular location is the nucleus inner membrane. The protein localises to the endoplasmic reticulum membrane. It is found in the cytoplasm. It localises to the nucleus. The enzyme catalyses 5alpha-cholest-8,14-dien-3beta-ol + NADPH + H(+) = 5alpha-cholest-8-en-3beta-ol + NADP(+). The catalysed reaction is 4,4-dimethyl-5alpha-cholesta-8,24-dien-3beta-ol + NADP(+) = 4,4-dimethyl-5alpha-cholesta-8,14,24-trien-3beta-ol + NADPH + H(+). It catalyses the reaction 4,4-dimethyl-8,14-cholestadien-3beta-ol + NADPH + H(+) = 4,4-dimethyl-5alpha-cholest-8-en-3beta-ol + NADP(+). It participates in steroid biosynthesis; cholesterol biosynthesis. Functionally, catalyzes the reduction of the C14-unsaturated bond of lanosterol, as part of the metabolic pathway leading to cholesterol biosynthesis. Plays a critical role in myeloid cell cholesterol biosynthesis which is essential to both myeloid cell growth and functional maturation. Mediates the activation of NADPH oxidases, perhaps by maintaining critical levels of cholesterol required for membrane lipid raft formation during neutrophil differentiation. Anchors the lamina and the heterochromatin to the inner nuclear membrane. This is Delta(14)-sterol reductase LBR (LBR) from Homo sapiens (Human).